The primary structure comprises 79 residues: Acyl carrier protein (79 aa).

The 76-residue stretch at 2-77 folds into the Carrier domain; the sequence is SEVAEKVKKI…DAIDYIEKKK (76 aa). Serine 37 bears the O-(pantetheine 4'-phosphoryl)serine mark.

It belongs to the acyl carrier protein (ACP) family. In terms of processing, 4'-phosphopantetheine is transferred from CoA to a specific serine of apo-ACP by AcpS. This modification is essential for activity because fatty acids are bound in thioester linkage to the sulfhydryl of the prosthetic group.

Its subcellular location is the cytoplasm. Its pathway is lipid metabolism; fatty acid biosynthesis. In terms of biological role, carrier of the growing fatty acid chain in fatty acid biosynthesis. The chain is Acyl carrier protein from Acidiphilium cryptum (strain JF-5).